Here is a 147-residue protein sequence, read N- to C-terminus: Large ribosomal subunit protein uL15 (147 aa).

A disordered region spans residues 1–55 (MKLDNLAPQPGAKKRKRRVGRGIAAGQGASCGFGMRGQKSRSGRPTRPGFEGGQM). A compositionally biased stretch (gly residues) spans 23-35 (IAAGQGASCGFGM).

Belongs to the universal ribosomal protein uL15 family. Part of the 50S ribosomal subunit.

Functionally, binds to the 23S rRNA. This is Large ribosomal subunit protein uL15 from Synechococcus elongatus (strain ATCC 33912 / PCC 7942 / FACHB-805) (Anacystis nidulans R2).